Reading from the N-terminus, the 267-residue chain is MTRIGRLFDCLKRENRKALIAYLTAGDPTPDHTPGLVEALVRGGADLIELGVPFTDPIADGPVIQRAGERALKAGTTLASVLEIARKIRETSEVPLLLFTYLNPVLRYGLDRLGADAAAAGIDGCLLTDASVEEAESYVAAMHKHGLDTVFLAAPTSTARRIELVARYSTGFVYLVSRTGVTGERESLSASVAPLIQAVRAATDLPLAVGFGISKPEHVAELGSQVEAVVVGSAFVRLIEQNAESAALEIQLESFTRELKRGFGARA.

Catalysis depends on proton acceptor residues E49 and D60.

The protein belongs to the TrpA family. In terms of assembly, tetramer of two alpha and two beta chains.

It catalyses the reaction (1S,2R)-1-C-(indol-3-yl)glycerol 3-phosphate + L-serine = D-glyceraldehyde 3-phosphate + L-tryptophan + H2O. Its pathway is amino-acid biosynthesis; L-tryptophan biosynthesis; L-tryptophan from chorismate: step 5/5. Its function is as follows. The alpha subunit is responsible for the aldol cleavage of indoleglycerol phosphate to indole and glyceraldehyde 3-phosphate. This is Tryptophan synthase alpha chain from Solibacter usitatus (strain Ellin6076).